The chain runs to 160 residues: MSQSKQYVMTYEGVKKLESELEYLKTVKRKEITEKIKIALGYGDLSENSEYDEAKNDQAFTEGRIIQLENMLKNAVVVDESEIPSDIVSVGSKVKVKDYEFDEEVEYSIVGSAEADPMNFKISNESPVGNALVGKKVGDVVEVTVPDGVNKFEILGISRS.

Positions 49–75 (SEYDEAKNDQAFTEGRIIQLENMLKNA) form a coiled coil.

The protein belongs to the GreA/GreB family.

Its function is as follows. Necessary for efficient RNA polymerase transcription elongation past template-encoded arresting sites. The arresting sites in DNA have the property of trapping a certain fraction of elongating RNA polymerases that pass through, resulting in locked ternary complexes. Cleavage of the nascent transcript by cleavage factors such as GreA or GreB allows the resumption of elongation from the new 3'terminus. GreA releases sequences of 2 to 3 nucleotides. The sequence is that of Transcription elongation factor GreA from Clostridium beijerinckii (strain ATCC 51743 / NCIMB 8052) (Clostridium acetobutylicum).